The following is a 313-amino-acid chain: Acetyl-coenzyme A carboxylase carboxyl transferase subunit beta, chloroplastic (313 aa).

A CoA carboxyltransferase N-terminal domain is found at 47–313 (LWTRCDNCEN…SAPCRRSNNS (267 aa)). The Zn(2+) site is built by cysteine 51, cysteine 54, cysteine 70, and cysteine 73. A C4-type zinc finger spans residues 51-73 (CDNCENMLYIRFLRQNKRICEEC).

This sequence belongs to the AccD/PCCB family. In terms of assembly, acetyl-CoA carboxylase is a heterohexamer composed of biotin carboxyl carrier protein, biotin carboxylase and 2 subunits each of ACCase subunit alpha and ACCase plastid-coded subunit beta (accD). Zn(2+) serves as cofactor.

The protein localises to the plastid. Its subcellular location is the chloroplast stroma. The enzyme catalyses N(6)-carboxybiotinyl-L-lysyl-[protein] + acetyl-CoA = N(6)-biotinyl-L-lysyl-[protein] + malonyl-CoA. Its pathway is lipid metabolism; malonyl-CoA biosynthesis; malonyl-CoA from acetyl-CoA: step 1/1. Component of the acetyl coenzyme A carboxylase (ACC) complex. Biotin carboxylase (BC) catalyzes the carboxylation of biotin on its carrier protein (BCCP) and then the CO(2) group is transferred by the transcarboxylase to acetyl-CoA to form malonyl-CoA. The polypeptide is Acetyl-coenzyme A carboxylase carboxyl transferase subunit beta, chloroplastic (Anthoceros angustus (Hornwort)).